A 165-amino-acid polypeptide reads, in one-letter code: Large ribosomal subunit protein uL10 (165 aa).

Belongs to the universal ribosomal protein uL10 family. As to quaternary structure, part of the ribosomal stalk of the 50S ribosomal subunit. The N-terminus interacts with L11 and the large rRNA to form the base of the stalk. The C-terminus forms an elongated spine to which L12 dimers bind in a sequential fashion forming a multimeric L10(L12)X complex.

Functionally, forms part of the ribosomal stalk, playing a central role in the interaction of the ribosome with GTP-bound translation factors. This is Large ribosomal subunit protein uL10 from Mycoplasma capricolum subsp. capricolum (strain California kid / ATCC 27343 / NCTC 10154).